We begin with the raw amino-acid sequence, 159 residues long: UPF0201 protein MK0399 (159 aa).

The protein belongs to the UPF0201 family.

The sequence is that of UPF0201 protein MK0399 from Methanopyrus kandleri (strain AV19 / DSM 6324 / JCM 9639 / NBRC 100938).